The primary structure comprises 98 residues: NADH-ubiquinone oxidoreductase chain 4L (98 aa).

3 helical membrane-spanning segments follow: residues 1–21 (MSLV…GLLM), 29–49 (ALLC…LTIL), and 61–81 (IILL…LVMI).

Belongs to the complex I subunit 4L family. Core subunit of respiratory chain NADH dehydrogenase (Complex I) which is composed of 45 different subunits.

The protein localises to the mitochondrion inner membrane. It carries out the reaction a ubiquinone + NADH + 5 H(+)(in) = a ubiquinol + NAD(+) + 4 H(+)(out). Core subunit of the mitochondrial membrane respiratory chain NADH dehydrogenase (Complex I) which catalyzes electron transfer from NADH through the respiratory chain, using ubiquinone as an electron acceptor. Part of the enzyme membrane arm which is embedded in the lipid bilayer and involved in proton translocation. The protein is NADH-ubiquinone oxidoreductase chain 4L (MT-ND4L) of Delphinapterus leucas (Beluga whale).